A 479-amino-acid chain; its full sequence is MNFETIIGLEVHVELNTNSKIFSPSSAHFGEDPNANTNVIDWSFPGVLPVMNKGVIDAGIKAALALNMDIHKEMHFDRKNYFYPDNPKAYQISQFDEPIGYNGWIEIKLEDGSTKKIRIERAHLEEDAGKNTHGTDGYSYVDLNRQGVPLIEIVSEADMRSPEEAYAYLTALKEIIQYTGISDVKMEEGSMRVDANISLRPYGQEQFGTKTELKNLNSFSNVRKGLEFEVERQAKLLRSGGAIRQETRRYDEANKGTILMRVKEGAADYRYFPEPDLPLYEIDDAWIDEMRAQLPQFPAQRRAKYEEELGLSAYDASQLTATKALSDFFETAVSLGGDAKQVSNWLQGEVAQFLNAEGKTIEEIALTPENLVEMIAIIADGTISSKMAKKVFVHLAKNGGSARAYVEKAGLVQISDPAVLVPIIHQVFADNEAAVADFKSGKRNADKAFTGFLMKATKGQANPQVAQQLLAQELQKLRD.

Belongs to the GatB/GatE family. GatB subfamily. As to quaternary structure, heterotrimer of A, B and C subunits.

The catalysed reaction is L-glutamyl-tRNA(Gln) + L-glutamine + ATP + H2O = L-glutaminyl-tRNA(Gln) + L-glutamate + ADP + phosphate + H(+). It carries out the reaction L-aspartyl-tRNA(Asn) + L-glutamine + ATP + H2O = L-asparaginyl-tRNA(Asn) + L-glutamate + ADP + phosphate + 2 H(+). Allows the formation of correctly charged Asn-tRNA(Asn) or Gln-tRNA(Gln) through the transamidation of misacylated Asp-tRNA(Asn) or Glu-tRNA(Gln) in organisms which lack either or both of asparaginyl-tRNA or glutaminyl-tRNA synthetases. The reaction takes place in the presence of glutamine and ATP through an activated phospho-Asp-tRNA(Asn) or phospho-Glu-tRNA(Gln). The protein is Aspartyl/glutamyl-tRNA(Asn/Gln) amidotransferase subunit B of Streptococcus pyogenes serotype M3 (strain ATCC BAA-595 / MGAS315).